Here is a 340-residue protein sequence, read N- to C-terminus: DNA-directed RNA polymerase subunit alpha (340 aa).

The alpha N-terminal domain (alpha-NTD) stretch occupies residues 1–233 (MIQDEIKVST…DLFIPLINSE (233 aa)). Residues 265-340 (TKDVAFKHIF…IQLPKNKNYL (76 aa)) are alpha C-terminal domain (alpha-CTD).

The protein belongs to the RNA polymerase alpha chain family. As to quaternary structure, in plastids the minimal PEP RNA polymerase catalytic core is composed of four subunits: alpha, beta, beta', and beta''. When a (nuclear-encoded) sigma factor is associated with the core the holoenzyme is formed, which can initiate transcription.

The protein localises to the plastid. Its subcellular location is the chloroplast. It carries out the reaction RNA(n) + a ribonucleoside 5'-triphosphate = RNA(n+1) + diphosphate. Functionally, DNA-dependent RNA polymerase catalyzes the transcription of DNA into RNA using the four ribonucleoside triphosphates as substrates. The sequence is that of DNA-directed RNA polymerase subunit alpha from Marchantia polymorpha (Common liverwort).